Reading from the N-terminus, the 157-residue chain is Class-10 pathogenesis-related protein 1 (157 aa).

It belongs to the BetVI family. As to expression, high levels in roots and not detectable in hypocotyls, cotyledons, stems, leaves and flower buds of untreated plants. After induction, high levels are present in the vascular bundles of leaves.

The protein localises to the cytoplasm. The protein is Class-10 pathogenesis-related protein 1 (MSPR10-1) of Medicago sativa (Alfalfa).